Consider the following 244-residue polypeptide: rRNA adenine N-6-methyltransferase (244 aa).

Residues N11, I13, G38, E59, D84, and N101 each coordinate S-adenosyl-L-methionine.

The protein belongs to the class I-like SAM-binding methyltransferase superfamily. rRNA adenine N(6)-methyltransferase family.

It catalyses the reaction adenosine(2085) in 23S rRNA + 2 S-adenosyl-L-methionine = N(6)-dimethyladenosine(2085) in 23S rRNA + 2 S-adenosyl-L-homocysteine + 2 H(+). This protein produces a dimethylation of the adenine residue at position 2085 in 23S rRNA, resulting in reduced affinity between ribosomes and macrolide-lincosamide-streptogramin B antibiotics. This Bacillus subtilis protein is rRNA adenine N-6-methyltransferase (ermC').